The chain runs to 715 residues: ATP-dependent RecD2 DNA helicase (715 aa).

Residues M1–W150 are not required for helicase activity. ATP contacts are provided by residues Q343 and G363–S367. 2 consecutive DNA-binding regions follow at residues G391 and T407–Y414. ATP is bound at residue Q466. A DNA-binding region is located at residue V470. R493 contributes to the ATP binding site. 3 consecutive DNA-binding regions follow at residues R554–K555, N596–N604, and T644–R647. ATP is bound at residue R679.

Belongs to the RecD family. RecD2 subfamily. Monomer; homodimers seem to be inactive.

It carries out the reaction Couples ATP hydrolysis with the unwinding of duplex DNA at the replication fork by translocating in the 5'-3' direction. This creates two antiparallel DNA single strands (ssDNA). The leading ssDNA polymer is the template for DNA polymerase III holoenzyme which synthesizes a continuous strand.. The enzyme catalyses ATP + H2O = ADP + phosphate + H(+). Functionally, DNA-dependent ATPase (ssDNA stimulates the ATPase better than dsDNA) and ATP-dependent 5'-3' DNA helicase. Plays a role in an antioxidant pathway. Involved in DNA damage repair and/or recombination. Appears to move along DNA in single base steps, powered by hydrolysis of 1 molecule of ATP. Has low processivity, unwinds about 15-20 base pairs/second. Short (20 bp) substrates with 5'-overhangs or forked ends are the best substrates, is much less efficient on 52 or 76 bp substrates with 5'-overhangs. The presence of single-stranded DNA-binding protein (SSB) increases unwinding 4-5 fold. Has no activity on blunt DNA or DNA with 3'-overhangs. Requires at least 10 bases of 5'-ssDNA for helicase activity. The sequence is that of ATP-dependent RecD2 DNA helicase from Deinococcus radiodurans (strain ATCC 13939 / DSM 20539 / JCM 16871 / CCUG 27074 / LMG 4051 / NBRC 15346 / NCIMB 9279 / VKM B-1422 / R1).